Here is an 87-residue protein sequence, read N- to C-terminus: U15-lycotoxin-Ls1f (87 aa).

The signal sequence occupies residues 1–20 (MNSKIFAVLLLLGLLSCVLS). The 46-residue stretch at 21–66 (DQYCPKSSITACKKMNIRNDCCKDDDCTGGSWCCATPCGNFCKYPT) folds into the WAP domain. Intrachain disulfides connect Cys24/Cys54, Cys32/Cys58, Cys41/Cys53, Cys42/Cys80, and Cys47/Cys62.

This sequence belongs to the venom protein 11 family. 01 (wap-1) subfamily. Contains 5 disulfide bonds. Expressed by the venom gland.

It localises to the secreted. In terms of biological role, has antibacterial activity. The protein is U15-lycotoxin-Ls1f of Lycosa singoriensis (Wolf spider).